Here is a 353-residue protein sequence, read N- to C-terminus: Uroporphyrinogen decarboxylase (353 aa).

Residues 27–31 (RQAGR), Phe46, Asp76, Tyr152, Ser207, and His321 contribute to the substrate site.

This sequence belongs to the uroporphyrinogen decarboxylase family. Homodimer.

The protein localises to the cytoplasm. The enzyme catalyses uroporphyrinogen III + 4 H(+) = coproporphyrinogen III + 4 CO2. It participates in porphyrin-containing compound metabolism; protoporphyrin-IX biosynthesis; coproporphyrinogen-III from 5-aminolevulinate: step 4/4. Its function is as follows. Catalyzes the decarboxylation of four acetate groups of uroporphyrinogen-III to yield coproporphyrinogen-III. In Listeria monocytogenes serotype 4b (strain F2365), this protein is Uroporphyrinogen decarboxylase.